The following is a 352-amino-acid chain: MTTEDYKKLAPYNIRRSSISGTEEEEVPFTPDEQKRRSQAALGVLRKTAPREHSYVLSAAKKTTSSPTQELQSPFLAKRVDVVDEDVLPEKNQEPPALARPDSGLSSSTTEKIAHRQITPPTAELHLVAPDLEALSTPDSCEENNAAPKIIKEIPGTLQDGQSDPTVASQQLADLSILEPLGSPSGAEQQIKAEDCTNMLMSPSSCMVTVTVSDTSEQSQLCVPGVSSKVDSSSTIKGILFVKEYMNTSEVSSGKPVSSHCDSPSSIEDSLDLAKKPPHEGTPSERPTEGVCTYCSHEIQDCPKITLEHLGICCHEYCFKCGICNKPMGDLLDQIFIHRDTIHCGKCYEKLF.

2 disordered regions span residues 1 to 73 (MTTE…ELQS) and 86 to 121 (DVLP…ITPP). Ser-18 is subject to Phosphoserine. Polar residues predominate over residues 61-72 (KKTTSSPTQELQ). Thr-137 is modified (phosphothreonine). Polar residues predominate over residues 251–268 (VSSGKPVSSHCDSPSSIE). A disordered region spans residues 251-287 (VSSGKPVSSHCDSPSSIEDSLDLAKKPPHEGTPSERP). Over residues 272–287 (DLAKKPPHEGTPSERP) the composition is skewed to basic and acidic residues. Residues 292 to 347 (CTYCSHEIQDCPKITLEHLGICCHEYCFKCGICNKPMGDLLDQIFIHRDTIHCGKC) enclose the LIM zinc-binding domain.

As to expression, expressed in skin, kidney, ovary, testis. Also expressed in brain, cartilage, heart, lung, spleen and thymus.

It localises to the cytoplasm. Its subcellular location is the cytoskeleton. The protein localises to the cell junction. The protein resides in the focal adhesion. Functionally, may be involved in the regulation of cellular proliferation and/or differentiation. This is Zinc finger protein 185 (Znf185) from Mus musculus (Mouse).